The chain runs to 157 residues: SsrA-binding protein (157 aa).

Residues 131 to 157 (KQLHDKRESVKQRDWQRDKARLMRDKG) are disordered. Residues 132-157 (QLHDKRESVKQRDWQRDKARLMRDKG) show a composition bias toward basic and acidic residues.

The protein belongs to the SmpB family.

It localises to the cytoplasm. Its function is as follows. Required for rescue of stalled ribosomes mediated by trans-translation. Binds to transfer-messenger RNA (tmRNA), required for stable association of tmRNA with ribosomes. tmRNA and SmpB together mimic tRNA shape, replacing the anticodon stem-loop with SmpB. tmRNA is encoded by the ssrA gene; the 2 termini fold to resemble tRNA(Ala) and it encodes a 'tag peptide', a short internal open reading frame. During trans-translation Ala-aminoacylated tmRNA acts like a tRNA, entering the A-site of stalled ribosomes, displacing the stalled mRNA. The ribosome then switches to translate the ORF on the tmRNA; the nascent peptide is terminated with the 'tag peptide' encoded by the tmRNA and targeted for degradation. The ribosome is freed to recommence translation, which seems to be the essential function of trans-translation. The polypeptide is SsrA-binding protein (Methylorubrum populi (strain ATCC BAA-705 / NCIMB 13946 / BJ001) (Methylobacterium populi)).